A 250-amino-acid polypeptide reads, in one-letter code: Triosephosphate isomerase, cytosolic (250 aa).

Asn-1 and Lys-3 together coordinate substrate. Residue His-87 is the Electrophile of the active site. Catalysis depends on Glu-160, which acts as the Proton acceptor.

Belongs to the triosephosphate isomerase family. As to quaternary structure, homodimer.

The protein localises to the cytoplasm. The enzyme catalyses D-glyceraldehyde 3-phosphate = dihydroxyacetone phosphate. It functions in the pathway carbohydrate biosynthesis; gluconeogenesis. It participates in carbohydrate degradation; glycolysis; D-glyceraldehyde 3-phosphate from glycerone phosphate: step 1/1. This Gracilaria gracilis (Red alga) protein is Triosephosphate isomerase, cytosolic (TPI1).